The following is a 653-amino-acid chain: uncharacterized protein (653 aa).

Helical transmembrane passes span 39 to 59 (AMTT…LKLI) and 207 to 227 (AVFV…AFTI). The HAMP domain maps to 225-277 (FTITKPIRELLTGVKNIASGDFHQRISLPFGGELGALIFNFNEMAERLEKYEQ). The region spanning 286-356 (EKAKLETLVS…PALNDIVRKN (71 aa)) is the PAS domain. A Histidine kinase domain is found at 421–651 (NVSHELRTPL…CFFFDLIIAK (231 aa)). Residue His424 is modified to Phosphohistidine; by autocatalysis.

The protein resides in the plastid. It localises to the chloroplast membrane. It carries out the reaction ATP + protein L-histidine = ADP + protein N-phospho-L-histidine.. This is an uncharacterized protein from Pyropia yezoensis (Susabi-nori).